A 1060-amino-acid polypeptide reads, in one-letter code: Protocadherin-1 (1060 aa).

The signal sequence occupies residues 1–57; it reads MDSGAGGRRCPEAALLILGPPRMEHLRHSPGPGGQRLLLPSMLLALLLLLAPSPGHA. Cadherin domains lie at 58-168, 169-280, 281-387, 396-506, 507-612, 613-715, and 718-844; these read TRVV…TPNF, ASPV…APKF, ERPS…APTI, THQD…APVF, TQSV…DPKF, MLSG…APYI, and PSNT…DPEY. Residues 58–852 lie on the Extracellular side of the membrane; sequence TRVVYKVPEE…EYERSKQRGN (795 aa). N-linked (GlcNAc...) asparagine glycans are attached at residues asparagine 305 and asparagine 403. Residues asparagine 618, asparagine 662, asparagine 813, and asparagine 818 are each glycosylated (N-linked (GlcNAc...) asparagine). Residues 853-873 form a helical membrane-spanning segment; sequence ILFGVVAGVVAVALLIALAVL. Residues 874–1060 lie on the Cytoplasmic side of the membrane; it reads VRYCRQREAK…HGAIWTEVWE (187 aa). Residues 884-897 show a composition bias toward basic and acidic residues; that stretch reads SGYQAGKKETKDLY. The segment at 884–1045 is disordered; that stretch reads SGYQAGKKET…QPFQLSTPQP (162 aa). Basic residues predominate over residues 907–920; sequence KGNKSKGKKSKSPK. A phosphoserine mark is found at serine 918, serine 949, serine 962, and serine 984. A compositionally biased stretch (low complexity) spans 973–986; the sequence is SPLPSIQLQPQSPS. Composition is skewed to polar residues over residues 1003 to 1024 and 1033 to 1043; these read FVGT…SYRT and QVGQPFQLSTP.

As to expression, highly expressed in the brain and neuro-glial cells.

It is found in the cell junction. It localises to the cell membrane. Its function is as follows. May be involved in cell-cell interaction processes and in cell adhesion. This chain is Protocadherin-1 (PCDH1), found in Homo sapiens (Human).